Reading from the N-terminus, the 367-residue chain is F-box protein At3g56470 (367 aa).

Residues 1-18 show a composition bias toward basic residues; that stretch reads MVTRRRSKKKKKTKRKKQ. The tract at residues 1-24 is disordered; the sequence is MVTRRRSKKKKKTKRKKQSSKEKE. The F-box domain maps to 26–81; sequence YQTFINLPCDLLQLVISRLPLKDNIRASAVCKTWHEACVSLRVIHTSPWLIYFSKT.

The polypeptide is F-box protein At3g56470 (Arabidopsis thaliana (Mouse-ear cress)).